We begin with the raw amino-acid sequence, 151 residues long: Large ribosomal subunit protein bL9 (151 aa).

This sequence belongs to the bacterial ribosomal protein bL9 family.

Binds to the 23S rRNA. The protein is Large ribosomal subunit protein bL9 of Desulfotalea psychrophila (strain LSv54 / DSM 12343).